Consider the following 228-residue polypeptide: Probable septum site-determining protein MinC (228 aa).

It belongs to the MinC family. In terms of assembly, interacts with MinD and FtsZ.

Its function is as follows. Cell division inhibitor that blocks the formation of polar Z ring septums. Rapidly oscillates between the poles of the cell to destabilize FtsZ filaments that have formed before they mature into polar Z rings. Prevents FtsZ polymerization. The sequence is that of Probable septum site-determining protein MinC from Symbiobacterium thermophilum (strain DSM 24528 / JCM 14929 / IAM 14863 / T).